A 273-amino-acid polypeptide reads, in one-letter code: MTILVVDRYYMLMNLLFALTCLLLNLTHCFSPKKFNISAATTSDSDWSIAGSTWYGNPTGYGSDGGACGYGNAVAQPPFSKMVSAGGPSLFKSGKGCGACYQVKCTSKSACSKNPVTVVITDECPGCVKESVHFDLSGTAFGAMAISGQDSQLRNVGELQILYKKVECNYIGKTVTFQVDKGSNANSFAVLVAYVNGDGEIGRIELKQALDSDKWLSMSQSWGAVWKLDVSSPLRAPLSLRVTSLESGKTVVASNVIPANWQPGAIYKSNVNF.

The first 29 residues, 1–29 (MTILVVDRYYMLMNLLFALTCLLLNLTHC), serve as a signal peptide directing secretion. The N-linked (GlcNAc...) asparagine glycan is linked to asparagine 36. The 109-residue stretch at 65–173 (GGACGYGNAV…KKVECNYIGK (109 aa)) folds into the Expansin-like EG45 domain. 3 disulfide bridges follow: cysteine 68–cysteine 97, cysteine 100–cysteine 168, and cysteine 105–cysteine 111. Residues 186–269 (NSFAVLVAYV…NWQPGAIYKS (84 aa)) enclose the Expansin-like CBD domain.

The protein belongs to the expansin family. Expansin B subfamily.

It is found in the secreted. The protein resides in the cell wall. Its subcellular location is the membrane. May cause loosening and extension of plant cell walls by disrupting non-covalent bonding between cellulose microfibrils and matrix glucans. No enzymatic activity has been found. This is Putative expansin-B2 (EXPB2) from Arabidopsis thaliana (Mouse-ear cress).